The chain runs to 345 residues: Uroporphyrinogen decarboxylase (345 aa).

Residues R27–R31, F46, D76, Y152, S207, and H321 contribute to the substrate site.

This sequence belongs to the uroporphyrinogen decarboxylase family. Homodimer.

The protein localises to the cytoplasm. It catalyses the reaction uroporphyrinogen III + 4 H(+) = coproporphyrinogen III + 4 CO2. The protein operates within porphyrin-containing compound metabolism; protoporphyrin-IX biosynthesis; coproporphyrinogen-III from 5-aminolevulinate: step 4/4. In terms of biological role, catalyzes the decarboxylation of four acetate groups of uroporphyrinogen-III to yield coproporphyrinogen-III. The protein is Uroporphyrinogen decarboxylase of Staphylococcus aureus (strain MRSA252).